We begin with the raw amino-acid sequence, 605 residues long: uncharacterized protein (605 aa).

A helical transmembrane segment spans residues 56–78; sequence ILWSSIAAACVILFAAYKTGAYF.

The protein localises to the cell membrane. This is an uncharacterized protein from Bacillus subtilis (strain 168).